Reading from the N-terminus, the 149-residue chain is Transcriptional repressor NrdR (149 aa).

The segment at C3–C34 is a zinc-finger region. Residues P49–E139 form the ATP-cone domain.

It belongs to the NrdR family. Zn(2+) is required as a cofactor.

In terms of biological role, negatively regulates transcription of bacterial ribonucleotide reductase nrd genes and operons by binding to NrdR-boxes. This chain is Transcriptional repressor NrdR, found in Actinobacillus pleuropneumoniae serotype 5b (strain L20).